The following is a 278-amino-acid chain: Urease accessory protein UreD (278 aa).

The protein belongs to the UreD family. As to quaternary structure, ureD, UreF and UreG form a complex that acts as a GTP-hydrolysis-dependent molecular chaperone, activating the urease apoprotein by helping to assemble the nickel containing metallocenter of UreC. The UreE protein probably delivers the nickel.

It localises to the cytoplasm. Its function is as follows. Required for maturation of urease via the functional incorporation of the urease nickel metallocenter. This chain is Urease accessory protein UreD, found in Blochmanniella pennsylvanica (strain BPEN).